The sequence spans 245 residues: tRNA (guanine-N(7)-)-methyltransferase (245 aa).

Residues E69, E94, D121, and D144 each contribute to the S-adenosyl-L-methionine site. The active site involves D144. Residues K148, D180, and 217 to 220 (TKFE) each bind substrate. Positions 200–225 (NLSSSGDYVPRPENRPKTKFERRGEG) are disordered. Residues 209 to 225 (PRPENRPKTKFERRGEG) are compositionally biased toward basic and acidic residues.

The protein belongs to the class I-like SAM-binding methyltransferase superfamily. TrmB family.

The catalysed reaction is guanosine(46) in tRNA + S-adenosyl-L-methionine = N(7)-methylguanosine(46) in tRNA + S-adenosyl-L-homocysteine. It participates in tRNA modification; N(7)-methylguanine-tRNA biosynthesis. Its function is as follows. Catalyzes the formation of N(7)-methylguanine at position 46 (m7G46) in tRNA. The chain is tRNA (guanine-N(7)-)-methyltransferase from Idiomarina loihiensis (strain ATCC BAA-735 / DSM 15497 / L2-TR).